The chain runs to 732 residues: Catalase-peroxidase (732 aa).

The disordered stretch occupies residues M1–M23. The segment at residues W97–Y220 is a cross-link (tryptophyl-tyrosyl-methioninium (Trp-Tyr) (with M-246)). Catalysis depends on H98, which acts as the Proton acceptor. Positions Y220 to M246 form a cross-link, tryptophyl-tyrosyl-methioninium (Tyr-Met) (with W-97). H261 serves as a coordination point for heme b.

It belongs to the peroxidase family. Peroxidase/catalase subfamily. Homodimer or homotetramer. Requires heme b as cofactor. In terms of processing, formation of the three residue Trp-Tyr-Met cross-link is important for the catalase, but not the peroxidase activity of the enzyme.

It carries out the reaction H2O2 + AH2 = A + 2 H2O. The enzyme catalyses 2 H2O2 = O2 + 2 H2O. In terms of biological role, bifunctional enzyme with both catalase and broad-spectrum peroxidase activity. This is Catalase-peroxidase from Chlorobium limicola (strain DSM 245 / NBRC 103803 / 6330).